A 28-amino-acid chain; its full sequence is Odorant-binding protein 1 (28 aa).

Belongs to the calycin superfamily. Lipocalin family. As to expression, nasal mucosa.

Its subcellular location is the secreted. The protein resides in the extracellular space. This soluble protein may play a specific role in odor discrimination and perception. The protein is Odorant-binding protein 1 of Hystrix cristata (North African crested porcupine).